The following is a 1083-amino-acid chain: MFSFEGDFKTRPKVSLGGASRKEEKASLLHRTQEERRKREEERRRLKNAIIIQSFIRGYRDRKQQYSIQRSAFDRCATLSQSGGAFPIANGPNLTLLVRQLLFFYKQNEDSKRLIWLYQNLIKHSSLFVKQLDGSERLTCLFQIKRLMSLCCRLLQNCNDDSLNVALPMRMLEVFSSENTYLPVLQDASYVVSVIEQILHYMIHNGYYRSLYLLINSKLPSSIEYSDLSRVPIAKILLENVLKPLHFTYNSCPEGARQQVFTAFTEEFLAAPFTDQIFHFIIPALADAQTVFPYEPFLNALLLIESRCSRKSGGAPWLFYFVLTVGENYLGALSEEGLLVYLRVLQTFLSQLPVSPASASCHDSASDSEEESEEADKPSSPEDGRLSVSYITEECLKKLDTKQQTNTLLNLVWRDSASEEVFTTMASVCHTLMVQHRMMVPKVRLLYSLAFNARFLRHLWFLISSMSTRMITGSMVPLLQVISRGSPMSFEDSSRIIPLFYLFSSLFSHSLISIHDNEFFGDPIEVVGQRQSSMMPFTLEELIMLSRCLRDACLGIIKLAYPETKPEVREEYITAFQSIGVTTSSEMQQCIQMEQKRWIQLFKVITNLVKMLKSRDTRRNFCPPNHWLSEQEDIKADKVTQLYVPASRHVWRFRRMGRIGPLQSTLDVGLESPPLSVSEERQLAVLTELPFVVPFEERVKIFQRLIYADKQEVQGDGPFLDGINVTIRRNYIYEDAYDKLSPENEPDLKKRIRVHLLNAHGLDEAGIDGGGIFREFLNELLKSGFNPNQGFFKTTNEGLLYPNPAAQMLVGDSFARHYYFLGRMLGKALYENMLVELPFAGFFLSKLLGTSADVDIHHLASLDPEVYKNLLFLKSYEDDVEELGLNFTVVNNDLGEAQVVELKFGGKDIPVTSANRIAYIHLVADYRLNRQIRQHCLAFRQGLANVVSLEWLRMFDQQEIQVLISGAQVPISLEDLKSFTNYSGGYSADHPVIKVFWRVVEGFTDEEKRKLLKFVTSCSRPPLLGFKELYPAFCIHNGGSDLERLPTASTCMNLLKLPEFYDETLLRSKLLYAIECAAGFELS.

Composition is skewed to basic and acidic residues over residues 1-10 and 20-40; these read MFSFEGDFKT and SRKE…RKRE. The segment at 1 to 40 is disordered; it reads MFSFEGDFKTRPKVSLGGASRKEEKASLLHRTQEERRKRE. Positions 1–60 are cis-determinant of acceptor ubiquitin-binding; that stretch reads MFSFEGDFKTRPKVSLGGASRKEEKASLLHRTQEERRKREEERRRLKNAIIIQSFIRGYR. In terms of domain architecture, IQ spans 45-74; it reads RLKNAIIIQSFIRGYRDRKQQYSIQRSAFD. A disordered region spans residues 355-385; sequence SPASASCHDSASDSEEESEEADKPSSPEDGR. Positions 375-385 are enriched in basic and acidic residues; that stretch reads ADKPSSPEDGR. The 340-residue stretch at 744 to 1083 folds into the HECT domain; that stretch reads NEPDLKKRIR…IECAAGFELS (340 aa). Lysine 903 is covalently cross-linked (Glycyl lysine isopeptide (Lys-Gly) (interchain with G-Cter in ubiquitin); by autocatalysis). Cysteine 1051 serves as the catalytic Glycyl thioester intermediate.

This sequence belongs to the UBE3C family. In terms of assembly, interacts with 26S proteasomes. Interacts (via the HECT domain) with UBE2D1 and, less efficiently, with UBE2L3. Post-translationally, autoubiquitinated; promoting its own degradation. In terms of tissue distribution, highly expressed in skeletal muscle. Detected at much lower levels in kidney and pancreas.

The enzyme catalyses S-ubiquitinyl-[E2 ubiquitin-conjugating enzyme]-L-cysteine + [acceptor protein]-L-lysine = [E2 ubiquitin-conjugating enzyme]-L-cysteine + N(6)-ubiquitinyl-[acceptor protein]-L-lysine.. The protein operates within protein modification; protein ubiquitination. E3 ubiquitin-protein ligase that specifically catalyzes 'Lys-29'- and 'Lys-48'-linked polyubiquitin chains. Accepts ubiquitin from the E2 ubiquitin-conjugating enzyme UBE2D1 in the form of a thioester and then directly transfers the ubiquitin to targeted substrates. Associates with the proteasome and promotes elongation of ubiquitin chains on substrates bound to the 26S proteasome. Also catalyzes 'Lys-29'- and 'Lys-48'-linked ubiquitination of 26S proteasome subunit ADRM1/RPN13 in response to proteotoxic stress, impairing the ability of the proteasome to bind and degrade ubiquitin-conjugated proteins. Acts as a negative regulator of autophagy by mediating 'Lys-29'- and 'Lys-48'-linked ubiquitination of PIK3C3/VPS34, promoting its degradation. Can assemble unanchored poly-ubiquitin chains in either 'Lys-29'- or 'Lys-48'-linked polyubiquitin chains; with some preference for 'Lys-48' linkages. Acts as a negative regulator of type I interferon by mediating 'Lys-48'-linked ubiquitination of IRF3 and IRF7, leading to their degradation by the proteasome. Catalyzes ubiquitination and degradation of CAND2. In Homo sapiens (Human), this protein is Ubiquitin-protein ligase E3C.